A 275-amino-acid polypeptide reads, in one-letter code: Glycerol-3-phosphate dehydrogenase [NAD(P)+] (275 aa).

Residues tryptophan 12, arginine 32, and lysine 105 each coordinate NADPH. The sn-glycerol 3-phosphate site is built by lysine 105, glycine 133, and threonine 135. Residue alanine 137 participates in NADPH binding. Residues lysine 188, aspartate 241, serine 251, arginine 252, and asparagine 253 each contribute to the sn-glycerol 3-phosphate site. Lysine 188 acts as the Proton acceptor in catalysis. Arginine 252 is a binding site for NADPH.

It belongs to the NAD-dependent glycerol-3-phosphate dehydrogenase family.

It is found in the cytoplasm. The catalysed reaction is sn-glycerol 3-phosphate + NAD(+) = dihydroxyacetone phosphate + NADH + H(+). The enzyme catalyses sn-glycerol 3-phosphate + NADP(+) = dihydroxyacetone phosphate + NADPH + H(+). Its pathway is membrane lipid metabolism; glycerophospholipid metabolism. In terms of biological role, catalyzes the reduction of the glycolytic intermediate dihydroxyacetone phosphate (DHAP) to sn-glycerol 3-phosphate (G3P), the key precursor for phospholipid synthesis. The sequence is that of Glycerol-3-phosphate dehydrogenase [NAD(P)+] from Paramagnetospirillum magneticum (strain ATCC 700264 / AMB-1) (Magnetospirillum magneticum).